Reading from the N-terminus, the 94-residue chain is DNA-binding protein HU (94 aa).

This sequence belongs to the bacterial histone-like protein family.

Its function is as follows. Histone-like DNA-binding protein which is capable of wrapping DNA to stabilize it, and thus to prevent its denaturation under extreme environmental conditions. The protein is DNA-binding protein HU (hup) of Xylella fastidiosa (strain 9a5c).